The chain runs to 563 residues: Light-independent protochlorophyllide reductase subunit B (563 aa).

Asp-36 contributes to the [4Fe-4S] cluster binding site. Asp-349 acts as the Proton donor in catalysis. 484 to 485 (GM) is a binding site for substrate.

The protein belongs to the ChlB/BchB/BchZ family. As to quaternary structure, protochlorophyllide reductase is composed of three subunits; ChlL, ChlN and ChlB. Forms a heterotetramer of two ChlB and two ChlN subunits. Requires [4Fe-4S] cluster as cofactor.

The protein resides in the plastid. The protein localises to the chloroplast. The catalysed reaction is chlorophyllide a + oxidized 2[4Fe-4S]-[ferredoxin] + 2 ADP + 2 phosphate = protochlorophyllide a + reduced 2[4Fe-4S]-[ferredoxin] + 2 ATP + 2 H2O. Its pathway is porphyrin-containing compound metabolism; chlorophyll biosynthesis (light-independent). Its function is as follows. Component of the dark-operative protochlorophyllide reductase (DPOR) that uses Mg-ATP and reduced ferredoxin to reduce ring D of protochlorophyllide (Pchlide) to form chlorophyllide a (Chlide). This reaction is light-independent. The NB-protein (ChlN-ChlB) is the catalytic component of the complex. The sequence is that of Light-independent protochlorophyllide reductase subunit B from Chlamydomonas moewusii (Chlamydomonas eugametos).